Here is a 564-residue protein sequence, read N- to C-terminus: Alpha-amylase 3 (564 aa).

The signal sequence occupies residues 1–21 (MFGVYFVLLFLSSALIHVANA). Cysteines 51 and 59 form a disulfide. Substrate contacts are provided by Asn-56 and Trp-105. Asn-143 provides a ligand contact to Ca(2+). Cys-172 and Cys-188 are disulfide-bonded. Asn-181 is a glycosylation site (N-linked (GlcNAc...) asparagine). A Ca(2+)-binding site is contributed by Asp-198. Arg-227 serves as a coordination point for substrate. Position 229 (Asp-229) interacts with Ca(2+). The Nucleophile role is filled by Asp-229. Position 232 to 233 (232 to 233 (KM)) interacts with substrate. Residue Asn-235 is glycosylated (N-linked (GlcNAc...) asparagine). Glu-253 provides a ligand contact to Ca(2+). The active-site Proton donor is Glu-253. Cys-263 and Cys-306 form a disulfide bridge. Residues Asn-282 and Asn-305 are each glycosylated (N-linked (GlcNAc...) asparagine). The substrate site is built by Asp-322 and Arg-369. N-linked (GlcNAc...) asparagine glycans are attached at residues Asn-438, Asn-447, and Asn-498. Ser-538 carries the GPI-anchor amidated serine lipid modification. The propeptide at 539 to 564 (SSRLILSFKTLVFGLGVTAMLFVLFF) is removed in mature form.

Belongs to the glycosyl hydrolase 13 family. Ca(2+) serves as cofactor. In terms of processing, N-glycosylated.

It is found in the cell membrane. It carries out the reaction Endohydrolysis of (1-&gt;4)-alpha-D-glucosidic linkages in polysaccharides containing three or more (1-&gt;4)-alpha-linked D-glucose units.. Has a role in cell wall biosynthesis where it is involved in maintaining cell wall strength and shape. The protein is Alpha-amylase 3 (aah3) of Schizosaccharomyces pombe (strain 972 / ATCC 24843) (Fission yeast).